A 439-amino-acid polypeptide reads, in one-letter code: tRNA modification GTPase MnmE (439 aa).

The (6S)-5-formyl-5,6,7,8-tetrahydrofolate site is built by Arg26, Glu88, and Arg127. The region spanning 220–367 (GARLALIGRP…LRDAIHTALI (148 aa)) is the TrmE-type G domain. Asn230 contributes to the K(+) binding site. GTP-binding positions include 230-235 (NAGKSS), 249-255 (TPIPGTT), and 274-277 (DTAG). Ser234 contributes to the Mg(2+) binding site. K(+) contacts are provided by Thr249, Ile251, and Thr254. Thr255 serves as a coordination point for Mg(2+). Lys439 lines the (6S)-5-formyl-5,6,7,8-tetrahydrofolate pocket.

This sequence belongs to the TRAFAC class TrmE-Era-EngA-EngB-Septin-like GTPase superfamily. TrmE GTPase family. In terms of assembly, homodimer. Heterotetramer of two MnmE and two MnmG subunits. K(+) serves as cofactor.

It localises to the cytoplasm. Functionally, exhibits a very high intrinsic GTPase hydrolysis rate. Involved in the addition of a carboxymethylaminomethyl (cmnm) group at the wobble position (U34) of certain tRNAs, forming tRNA-cmnm(5)s(2)U34. The protein is tRNA modification GTPase MnmE of Deinococcus geothermalis (strain DSM 11300 / CIP 105573 / AG-3a).